Reading from the N-terminus, the 482-residue chain is tRNA sulfurtransferase (482 aa).

The THUMP domain maps to 61-165 (LAIRDALTRI…DDRLLLIKGR (105 aa)). Residues 183 to 184 (LI), Lys-265, Gly-287, and Gln-296 contribute to the ATP site. A disulfide bridge links Cys-344 with Cys-456. A Rhodanese domain is found at 404 to 482 (FGANDVILDI…GFANVKVYRP (79 aa)). The active-site Cysteine persulfide intermediate is the Cys-456.

Belongs to the ThiI family.

The protein localises to the cytoplasm. The enzyme catalyses [ThiI sulfur-carrier protein]-S-sulfanyl-L-cysteine + a uridine in tRNA + 2 reduced [2Fe-2S]-[ferredoxin] + ATP + H(+) = [ThiI sulfur-carrier protein]-L-cysteine + a 4-thiouridine in tRNA + 2 oxidized [2Fe-2S]-[ferredoxin] + AMP + diphosphate. The catalysed reaction is [ThiS sulfur-carrier protein]-C-terminal Gly-Gly-AMP + S-sulfanyl-L-cysteinyl-[cysteine desulfurase] + AH2 = [ThiS sulfur-carrier protein]-C-terminal-Gly-aminoethanethioate + L-cysteinyl-[cysteine desulfurase] + A + AMP + 2 H(+). The protein operates within cofactor biosynthesis; thiamine diphosphate biosynthesis. Its function is as follows. Catalyzes the ATP-dependent transfer of a sulfur to tRNA to produce 4-thiouridine in position 8 of tRNAs, which functions as a near-UV photosensor. Also catalyzes the transfer of sulfur to the sulfur carrier protein ThiS, forming ThiS-thiocarboxylate. This is a step in the synthesis of thiazole, in the thiamine biosynthesis pathway. The sulfur is donated as persulfide by IscS. This is tRNA sulfurtransferase from Salmonella paratyphi B (strain ATCC BAA-1250 / SPB7).